The sequence spans 275 residues: MATKKFKPTSPGRRFVTVSDFREVTVTEPEKSLVEPLRKKAGRNFQGRVTVRHRGGGHKRLYRVIDFKRNKDGVPGKVATIEYDPNRSANIALVNYADGEKRYIVAPAGLKVGQEIMSGPQADIKVGNALPLRNIPPGVLIHNIELYPGHGARVVRSAGGSAQLMAKEGDYAHVRLPSGEVRLFPLDCRATIGQVGNVEHENIVIGKAGRARWLGIRPTVRGVVMNPVDHPHGGGEGRSPIGRPPVTPWGKPALGTRTRNKKKASSKLIVKRRTK.

The interval 225 to 275 (MNPVDHPHGGGEGRSPIGRPPVTPWGKPALGTRTRNKKKASSKLIVKRRTK) is disordered. Residues 258 to 275 (TRNKKKASSKLIVKRRTK) show a composition bias toward basic residues.

Belongs to the universal ribosomal protein uL2 family. In terms of assembly, part of the 50S ribosomal subunit. Forms a bridge to the 30S subunit in the 70S ribosome.

One of the primary rRNA binding proteins. Required for association of the 30S and 50S subunits to form the 70S ribosome, for tRNA binding and peptide bond formation. It has been suggested to have peptidyltransferase activity; this is somewhat controversial. Makes several contacts with the 16S rRNA in the 70S ribosome. The polypeptide is Large ribosomal subunit protein uL2 (Desulforudis audaxviator (strain MP104C)).